Here is a 348-residue protein sequence, read N- to C-terminus: Replication-associated protein (348 aa).

Over residues 1–17 the composition is skewed to low complexity; the sequence is MRAPASSAASNRPGPSN. Positions 1–22 are disordered; the sequence is MRAPASSAASNRPGPSNHPTPR. Residues 22–125 enclose the CRESS-DNA virus Rep endonuclease domain; sequence RWNSKQFFLT…NGDSDEMGEL (104 aa). Residues 29–32 carry the RCR-1 motif; it reads FLTY. The a divalent metal cation site is built by Glu-63, His-71, and His-73. The short motif at 71–73 is the RCR-2 element; that stretch reads HLH. Tyr-111 functions as the For DNA cleavage activity in the catalytic mechanism. Positions 111-114 match the RCR-3 motif; sequence YISK. The oligomerization stretch occupies residues 176–188; it reads SAAALFTEPPPVY. ATP is bound at residue 228-235; that stretch reads GPSRTGKT. Residues 251 to 269 are transactivation; that stretch reads VDFTHYDKDAIYNVIDDVP. The short motif at 291-301 is the Nuclear localization signal element; it reads KYGKKKKIPGG.

This sequence belongs to the geminiviridae Rep protein family. As to quaternary structure, homooligomer. Rep binds to repeated DNA motifs (iterons). Forms the O-complex, which is a Rep-DNA complex involved in the initiation of RCR. Part of the C- and V-complexes which are RepA-Rep-DNA complexes involved in the c-sense and v-sense transcription. It depends on Mg(2+) as a cofactor. Mn(2+) serves as cofactor.

The protein resides in the host nucleus. In terms of biological role, essential for the replication of viral ssDNA. The closed circular ssDNA genome is first converted to a superhelical dsDNA. Rep binds a specific region at the genome origin of replication. It introduces an endonucleolytic nick within the conserved sequence 5'-TAATATTAC-3' in the intergenic region of the genome present in all geminiviruses, thereby initiating the rolling circle replication (RCR). Following cleavage, binds covalently to the 5'-phosphate of DNA as a tyrosyl ester. The cleavage gives rise to a free 3'-OH that serves as a primer for the cellular DNA polymerase. The polymerase synthesizes the (+) strand DNA by rolling circle mechanism. After one round of replication, a Rep-catalyzed nucleotidyl transfer reaction releases a circular single-stranded virus genome, thereby terminating the replication. Displays origin-specific DNA cleavage, nucleotidyl transferase, ATPase and helicase activities. Acts as an inhibitor of C-sense gene transcription. The sequence is that of Replication-associated protein from Miscanthus streak virus (isolate 91) (MiSV).